A 322-amino-acid chain; its full sequence is Probable transposase for insertion sequence element ISA1214 (322 aa).

Belongs to the transposase 11 family.

Involved in the transposition of the insertion sequence ISA1214. The polypeptide is Probable transposase for insertion sequence element ISA1214 (Archaeoglobus fulgidus (strain ATCC 49558 / DSM 4304 / JCM 9628 / NBRC 100126 / VC-16)).